The chain runs to 284 residues: Acetyl-coenzyme A carboxylase carboxyl transferase subunit beta (284 aa).

A CoA carboxyltransferase N-terminal domain is found at 31–284 (FWTYCKGCDS…LYQILAMHKK (254 aa)). Cysteine 35, cysteine 38, cysteine 54, and cysteine 57 together coordinate Zn(2+). The segment at 35–57 (CKGCDSHVFRKDIEENSFVCPKC) adopts a C4-type zinc-finger fold.

The protein belongs to the AccD/PCCB family. Acetyl-CoA carboxylase is a heterohexamer composed of biotin carboxyl carrier protein (AccB), biotin carboxylase (AccC) and two subunits each of ACCase subunit alpha (AccA) and ACCase subunit beta (AccD). Zn(2+) is required as a cofactor.

It is found in the cytoplasm. It catalyses the reaction N(6)-carboxybiotinyl-L-lysyl-[protein] + acetyl-CoA = N(6)-biotinyl-L-lysyl-[protein] + malonyl-CoA. It functions in the pathway lipid metabolism; malonyl-CoA biosynthesis; malonyl-CoA from acetyl-CoA: step 1/1. Component of the acetyl coenzyme A carboxylase (ACC) complex. Biotin carboxylase (BC) catalyzes the carboxylation of biotin on its carrier protein (BCCP) and then the CO(2) group is transferred by the transcarboxylase to acetyl-CoA to form malonyl-CoA. The chain is Acetyl-coenzyme A carboxylase carboxyl transferase subunit beta from Clostridioides difficile (strain 630) (Peptoclostridium difficile).